The primary structure comprises 320 residues: V-set and transmembrane domain-containing protein 4 (320 aa).

Residues 1 to 23 (MRLLALAAAALLARAPAPEVCAA) form the signal peptide. Positions 24 to 155 (LNVTVSPGPV…SSATEMRVIS (132 aa)) constitute an Ig-like domain. Residues 24-180 (LNVTVSPGPV…WAFFEDLYVY (157 aa)) are Extracellular-facing. 4 N-linked (GlcNAc...) asparagine glycosylation sites follow: Asn-25, Asn-41, Asn-89, and Asn-144. A disulfide bridge links Cys-46 with Cys-127. A helical membrane pass occupies residues 181-201 (AVLVCCVGILSILLFMLVIVW). At 202–320 (QSVFNKRKSR…AQILFEENKL (119 aa)) the chain is on the cytoplasmic side.

In terms of processing, proteolytically cleaved to generate a bioactive peptide.

The protein resides in the secreted. Its subcellular location is the cell membrane. Its function is as follows. Peptide Lv enhances L-type voltage-gated calcium channel (L-VGCC) currents in retinal photoreceptors. The protein is V-set and transmembrane domain-containing protein 4 (VSTM4) of Homo sapiens (Human).